The chain runs to 111 residues: Antirepressor protein CarS (111 aa).

Monomer. Interacts with CarA and CarH.

Involved in carotenoid biosynthesis. Antagonizes the transcriptional repressor proteins CarA and CarH by preventing their binding to DNA. Can also dissociate preformed CarA-DNA complexes. Does not bind DNA. The sequence is that of Antirepressor protein CarS (carS) from Myxococcus xanthus.